The sequence spans 92 residues: Small ribosomal subunit protein uS19c (92 aa).

Belongs to the universal ribosomal protein uS19 family.

The protein resides in the plastid. The protein localises to the chloroplast. Protein S19 forms a complex with S13 that binds strongly to the 16S ribosomal RNA. This Pinus koraiensis (Korean pine) protein is Small ribosomal subunit protein uS19c.